Reading from the N-terminus, the 345-residue chain is Probable 1-aminocyclopropane-1-carboxylate deaminase (345 aa).

Lysine 58 is subject to N6-(pyridoxal phosphate)lysine. Serine 85 acts as the Nucleophile in catalysis.

Belongs to the ACC deaminase/D-cysteine desulfhydrase family. Requires pyridoxal 5'-phosphate as cofactor.

It catalyses the reaction 1-aminocyclopropane-1-carboxylate + H2O = 2-oxobutanoate + NH4(+). Its function is as follows. Catalyzes a cyclopropane ring-opening reaction, the irreversible conversion of 1-aminocyclopropane-1-carboxylate (ACC) to ammonia and alpha-ketobutyrate. In Cryptococcus neoformans var. neoformans serotype D (strain JEC21 / ATCC MYA-565) (Filobasidiella neoformans), this protein is Probable 1-aminocyclopropane-1-carboxylate deaminase.